The sequence spans 176 residues: N-alpha-acetyltransferase 30 (176 aa).

The 157-residue stretch at 3 to 159 (IVYKPLDIRN…DAFKLILPLT (157 aa)) folds into the N-acetyltransferase domain.

Belongs to the acetyltransferase family. MAK3 subfamily. In terms of assembly, component of the N-terminal acetyltransferase C (NatC) complex, which is composed of MAK3, MAK10 and MAK31.

The protein localises to the cytoplasm. It is found in the nucleus. It carries out the reaction N-terminal L-methionyl-L-leucyl-[protein] + acetyl-CoA = N-terminal N(alpha)-acetyl-L-methionyl-L-leucyl-[protein] + CoA + H(+). The catalysed reaction is N-terminal L-methionyl-L-isoleucyl-[protein] + acetyl-CoA = N-terminal N(alpha)-acetyl-L-methionyl-L-isoleucyl-[protein] + CoA + H(+). The enzyme catalyses N-terminal L-methionyl-L-phenylalanyl-[protein] + acetyl-CoA = N-terminal N(alpha)-acetyl-L-methionyl-L-phenylalanyl-[protein] + CoA + H(+). It catalyses the reaction N-terminal L-methionyl-L-tryptophyl-[protein] + acetyl-CoA = N-terminal N(alpha)-acetyl-L-methionyl-L-tryptophyl-[protein] + CoA + H(+). It carries out the reaction N-terminal L-methionyl-L-tyrosyl-[protein] + acetyl-CoA = N-terminal N(alpha)-acetyl-L-methionyl-L-tyrosyl-[protein] + CoA + H(+). Catalytic component of the NatC N-terminal acetyltransferase, which catalyzes acetylation of the N-terminus Met of L-A virus GAG protein and possibly GRH1. The chain is N-alpha-acetyltransferase 30 (MAK3) from Saccharomyces cerevisiae (strain ATCC 204508 / S288c) (Baker's yeast).